We begin with the raw amino-acid sequence, 255 residues long: Ribonuclease HII (255 aa).

Positions 72 to 255 (AIICGIDEVG…KSFEPIKSLL (184 aa)) constitute an RNase H type-2 domain. A divalent metal cation-binding residues include aspartate 78, glutamate 79, and aspartate 170.

It belongs to the RNase HII family. It depends on Mn(2+) as a cofactor. Requires Mg(2+) as cofactor.

The protein localises to the cytoplasm. The catalysed reaction is Endonucleolytic cleavage to 5'-phosphomonoester.. Endonuclease that specifically degrades the RNA of RNA-DNA hybrids. The sequence is that of Ribonuclease HII from Staphylococcus aureus (strain MSSA476).